We begin with the raw amino-acid sequence, 212 residues long: MAERHTIADSKRAFHQAFPHVIAPLYRRIADELLVELHLLSHQATFQANSLFAVGLKTVFERFTQGYRPMEHPAALLSALCSSNGFDDEQLKQAAQHCLQDAEGHSDDAFQSWLKEQSLSDGAHYSRLMAVGLLALLEASSDESDASSLRQRAVKLSVDLGLPAERVEKDLTVFSSNSERMEQAVELMQETLAADRRKKEKRLAEAAESTAG.

A coiled-coil region spans residues 179 to 201 (ERMEQAVELMQETLAADRRKKEK).

Belongs to the THF1 family.

Its function is as follows. May be involved in photosynthetic membrane biogenesis. This Parasynechococcus marenigrum (strain WH8102) protein is Protein Thf1.